A 151-amino-acid chain; its full sequence is D-aminoacyl-tRNA deacylase (151 aa).

Residues 137-138 (GP) carry the Gly-cisPro motif, important for rejection of L-amino acids motif.

It belongs to the DTD family. In terms of assembly, homodimer.

The protein resides in the cytoplasm. The enzyme catalyses glycyl-tRNA(Ala) + H2O = tRNA(Ala) + glycine + H(+). It carries out the reaction a D-aminoacyl-tRNA + H2O = a tRNA + a D-alpha-amino acid + H(+). In terms of biological role, an aminoacyl-tRNA editing enzyme that deacylates mischarged D-aminoacyl-tRNAs. Also deacylates mischarged glycyl-tRNA(Ala), protecting cells against glycine mischarging by AlaRS. Acts via tRNA-based rather than protein-based catalysis; rejects L-amino acids rather than detecting D-amino acids in the active site. By recycling D-aminoacyl-tRNA to D-amino acids and free tRNA molecules, this enzyme counteracts the toxicity associated with the formation of D-aminoacyl-tRNA entities in vivo and helps enforce protein L-homochirality. The chain is D-aminoacyl-tRNA deacylase from Fusobacterium nucleatum subsp. nucleatum (strain ATCC 25586 / DSM 15643 / BCRC 10681 / CIP 101130 / JCM 8532 / KCTC 2640 / LMG 13131 / VPI 4355).